Here is a 214-residue protein sequence, read N- to C-terminus: Small ribosomal subunit protein eS6 (214 aa).

This sequence belongs to the eukaryotic ribosomal protein eS6 family.

The chain is Small ribosomal subunit protein eS6 (rps6e) from Saccharolobus islandicus (strain Y.G.57.14 / Yellowstone #1) (Sulfolobus islandicus).